The chain runs to 350 residues: Chemokine C-C motif receptor-like 2 (350 aa).

The Extracellular segment spans residues 1-43 (MANYTSAPEDDYDVFIEDDLSNDERELCSPYDPQALLAQLVPY). The N-linked (GlcNAc...) asparagine glycan is linked to N3. The chain crosses the membrane as a helical span at residues 44–64 (LFITVFLVGLLDNILVVLIMV). At 65 to 74 (KYKGLKQVEN) the chain is on the cytoplasmic side. A helical transmembrane segment spans residues 75–95 (IYLLNLAVCNLCFLCTLPFWV). Residues 96–110 (HMAWHEGDPGEPLCK) lie on the Extracellular side of the membrane. A disulfide bridge links C109 with C187. The helical transmembrane segment at 111-131 (ILLVLYSVGLFSEAFFNVLLT) threads the bilayer. Topologically, residues 132 to 149 (VQRYQKFFQMRGFFSATR) are cytoplasmic. A helical transmembrane segment spans residues 150–170 (MVAGSIFPSALVWVIAVLVML). At 171–204 (PELAFYKPQMENQKYKCFFGRPLFLPADETFWKH) the chain is on the extracellular side. The helical transmembrane segment at 205–225 (FLTLKMNILGFLLPLFVFVFC) threads the bilayer. At 226–244 (YVRMRRTLKFGERGYDLFK) the chain is on the cytoplasmic side. A helical membrane pass occupies residues 245 to 265 (LVFTIMVVFLLMWGPYNIALF). The Extracellular segment spans residues 266-288 (LSAFNEHFSLHGCESSHNLDRST). Residues 289–309 (LITKIIATTHCCVNPLLYVFF) traverse the membrane as a helical segment. The Cytoplasmic segment spans residues 310 to 350 (DEAFRKHLYHFCHLCNDTAPQPTEEPAQGTSREEPCLSTKM). Positions 329–350 (PQPTEEPAQGTSREEPCLSTKM) are disordered.

Belongs to the G-protein coupled receptor 1 family.

It is found in the cell membrane. In terms of biological role, receptor for CCL19 and chemerin/RARRES2. Does not appear to be a signaling receptor, but may have a role in modulating chemokine-triggered immune responses by capturing and internalizing CCL19 or by presenting RARRES2 ligand to CMKLR1, a functional signaling receptor. Plays a critical role for the development of Th2 responses. The protein is Chemokine C-C motif receptor-like 2 (CCRL2) of Sus scrofa (Pig).